Reading from the N-terminus, the 333-residue chain is Holliday junction branch migration complex subunit RuvB (333 aa).

The interval 1 to 182 (MEERLVSGDV…FGVISRLEYY (182 aa)) is large ATPase domain (RuvB-L). Residues Leu21, Arg22, Gly63, Lys66, Thr67, Thr68, 129–131 (EDY), Arg172, Tyr182, and Arg219 each bind ATP. Thr67 is a binding site for Mg(2+). The interval 183–253 (TTEHLTQIVM…LAKEALELLQ (71 aa)) is small ATPAse domain (RuvB-S). The segment at 256–333 (RLGLDHIDHK…EHFGMEVPKQ (78 aa)) is head domain (RuvB-H). Residues Arg311 and Arg316 each contribute to the DNA site.

Belongs to the RuvB family. In terms of assembly, homohexamer. Forms an RuvA(8)-RuvB(12)-Holliday junction (HJ) complex. HJ DNA is sandwiched between 2 RuvA tetramers; dsDNA enters through RuvA and exits via RuvB. An RuvB hexamer assembles on each DNA strand where it exits the tetramer. Each RuvB hexamer is contacted by two RuvA subunits (via domain III) on 2 adjacent RuvB subunits; this complex drives branch migration. In the full resolvosome a probable DNA-RuvA(4)-RuvB(12)-RuvC(2) complex forms which resolves the HJ.

The protein localises to the cytoplasm. The enzyme catalyses ATP + H2O = ADP + phosphate + H(+). Its function is as follows. The RuvA-RuvB-RuvC complex processes Holliday junction (HJ) DNA during genetic recombination and DNA repair, while the RuvA-RuvB complex plays an important role in the rescue of blocked DNA replication forks via replication fork reversal (RFR). RuvA specifically binds to HJ cruciform DNA, conferring on it an open structure. The RuvB hexamer acts as an ATP-dependent pump, pulling dsDNA into and through the RuvAB complex. RuvB forms 2 homohexamers on either side of HJ DNA bound by 1 or 2 RuvA tetramers; 4 subunits per hexamer contact DNA at a time. Coordinated motions by a converter formed by DNA-disengaged RuvB subunits stimulates ATP hydrolysis and nucleotide exchange. Immobilization of the converter enables RuvB to convert the ATP-contained energy into a lever motion, pulling 2 nucleotides of DNA out of the RuvA tetramer per ATP hydrolyzed, thus driving DNA branch migration. The RuvB motors rotate together with the DNA substrate, which together with the progressing nucleotide cycle form the mechanistic basis for DNA recombination by continuous HJ branch migration. Branch migration allows RuvC to scan DNA until it finds its consensus sequence, where it cleaves and resolves cruciform DNA. The chain is Holliday junction branch migration complex subunit RuvB from Geobacillus sp. (strain WCH70).